A 134-amino-acid chain; its full sequence is MARVTVEDCIDKVENRFELVLLASHRARLISQGASITIDRDNDKNPVVALREIADETLSPDDLKEDLIHSLQKHVEVDEPEPDPASMIAAGGVAAADGEEQDDVPETITFDQMSEEELLAGIEGLVPPEKSDDY.

It belongs to the RNA polymerase subunit omega family. As to quaternary structure, the RNAP catalytic core consists of 2 alpha, 1 beta, 1 beta' and 1 omega subunit. When a sigma factor is associated with the core the holoenzyme is formed, which can initiate transcription.

The enzyme catalyses RNA(n) + a ribonucleoside 5'-triphosphate = RNA(n+1) + diphosphate. Promotes RNA polymerase assembly. Latches the N- and C-terminal regions of the beta' subunit thereby facilitating its interaction with the beta and alpha subunits. The sequence is that of DNA-directed RNA polymerase subunit omega from Rhizobium johnstonii (strain DSM 114642 / LMG 32736 / 3841) (Rhizobium leguminosarum bv. viciae).